The primary structure comprises 381 residues: Ubiquitin-associated protein 1-like (381 aa).

The UMA domain maps to 4–50; the sequence is LDGVPFKLPKGFVIGTEPLPGPELSVPACGEVLLGSMHDFSLERTAL. 2 disordered regions span residues 87-141 and 185-228; these read LAPA…PGRR and SLCP…LRSH. Residues 95–104 are compositionally biased toward basic and acidic residues; the sequence is RDPEAGHQER. Over residues 105–123 the composition is skewed to acidic residues; it reads PEEEGEDEAEASSGSEEEP. The segment covering 124-141 has biased composition (low complexity); it reads APSSLQPGSPASPGPGRR. Positions 197–216 are enriched in pro residues; it reads ASPPGPAPQHPAAPASPPRP.

The chain is Ubiquitin-associated protein 1-like (UBAP1L) from Homo sapiens (Human).